Consider the following 425-residue polypeptide: Dihydroorotase (425 aa).

Positions 59 and 61 each coordinate Zn(2+). Residues 61–63 (HLR) and asparagine 93 each bind substrate. 3 residues coordinate Zn(2+): aspartate 151, histidine 178, and histidine 231. Asparagine 277 lines the substrate pocket. Aspartate 304 lines the Zn(2+) pocket. Aspartate 304 is a catalytic residue. Substrate is bound by residues histidine 308 and 322–323 (FG).

Belongs to the metallo-dependent hydrolases superfamily. DHOase family. Class I DHOase subfamily. Zn(2+) serves as cofactor.

The catalysed reaction is (S)-dihydroorotate + H2O = N-carbamoyl-L-aspartate + H(+). It participates in pyrimidine metabolism; UMP biosynthesis via de novo pathway; (S)-dihydroorotate from bicarbonate: step 3/3. In terms of biological role, catalyzes the reversible cyclization of carbamoyl aspartate to dihydroorotate. In Staphylococcus epidermidis (strain ATCC 12228 / FDA PCI 1200), this protein is Dihydroorotase.